A 443-amino-acid polypeptide reads, in one-letter code: Regulator of sigma E protease (443 aa).

Position 21 (H21) interacts with Zn(2+). E22 is a catalytic residue. Residue H25 coordinates Zn(2+). Residues 98 to 118 traverse the membrane as a helical segment; it reads FVIIAGPLANFIFAIFAYWVI. 2 PDZ domains span residues 106 to 185 and 198 to 287; these read ANFI…SPFN and NWTF…TPVR. 2 consecutive transmembrane segments (helical) span residues 369–389 and 423–443; these read LVYF…MNLF and IGAA…FLRL.

Belongs to the peptidase M50B family. Interacts with RseA. It depends on Zn(2+) as a cofactor.

The protein resides in the cell inner membrane. In terms of biological role, a site-2 regulated intramembrane protease (S2P) that cleaves a peptide bond in the transmembrane region of RseA. Part of a regulated intramembrane proteolysis (RIP) cascade. Acts on DegS-cleaved RseA to release the cytoplasmic domain of RseA. This provides the cell with sigma-E (RpoE) activity through the proteolysis of RseA. This Haemophilus influenzae (strain ATCC 51907 / DSM 11121 / KW20 / Rd) protein is Regulator of sigma E protease (rsep).